The primary structure comprises 90 residues: UPF0223 protein SH1855 (90 aa).

This sequence belongs to the UPF0223 family.

This is UPF0223 protein SH1855 from Staphylococcus haemolyticus (strain JCSC1435).